The following is a 546-amino-acid chain: Chaperonin GroEL (546 aa).

ATP is bound by residues 30–33 (TLGP), lysine 51, 87–91 (DGTTT), glycine 415, and aspartate 496. Residues 526-546 (PEDKPAPAMPGGMGGMGGMDF) are disordered. Positions 536–546 (GGMGGMGGMDF) are enriched in gly residues.

It belongs to the chaperonin (HSP60) family. As to quaternary structure, forms a cylinder of 14 subunits composed of two heptameric rings stacked back-to-back. Interacts with the co-chaperonin GroES.

Its subcellular location is the cytoplasm. It carries out the reaction ATP + H2O + a folded polypeptide = ADP + phosphate + an unfolded polypeptide.. Together with its co-chaperonin GroES, plays an essential role in assisting protein folding. The GroEL-GroES system forms a nano-cage that allows encapsulation of the non-native substrate proteins and provides a physical environment optimized to promote and accelerate protein folding. This is Chaperonin GroEL from Zymomonas mobilis subsp. mobilis (strain ATCC 31821 / ZM4 / CP4).